The sequence spans 454 residues: Enhancer of mRNA-decapping protein 3 (454 aa).

The Sm domain maps to 1–61 (MSVADFYGSN…IKDLRILPKN (61 aa)). The region spanning 87 to 123 (SKNKWSMDCDEEFDFAANLEKFDKKQVFAEFREKDKK) is the DFDF domain. The interval 173 to 192 (SSSSNGHVTPGSKKGSRETL) is disordered. Positions 222-431 (LSQGIALAIA…NLGTGSQTWA (210 aa)) constitute a YjeF N-terminal domain.

Belongs to the EDC3 family. In terms of assembly, homodimer. Interacts with dcp2.

It is found in the cytoplasm. The protein localises to the P-body. Its function is as follows. Stimulates decapping of both stable and unstable mRNA during mRNA decay. Stimulates decapping presumably by preventing the DCP1-DCP2 decapping complex from adopting an inactive conformation. Together with pdc1, acts as a scaffolding protein sufficient for the phase transition of the components of the 5' to 3' mRNA degradation machinery to form P-bodies. Intermolecular interactions between the edc3 Sm domain and at least 10 helical leucine-rich motifs in dcp2 and pdc1 build the core of the interaction network of this spontaneous clustering process. The polypeptide is Enhancer of mRNA-decapping protein 3 (edc3) (Schizosaccharomyces pombe (strain 972 / ATCC 24843) (Fission yeast)).